Reading from the N-terminus, the 341-residue chain is GTP-binding protein GTR2 (341 aa).

GTP contacts are provided by serine 23, serine 24, serine 43, histidine 124, and aspartate 127.

It belongs to the GTR/RAG GTP-binding protein family. As to quaternary structure, heterodimer; with GTR1. Component of the GSE complex composed of GTR1, GTR2, SLM4, MEH1 and LTV1. Component of the EGO complex, at least composed of GTR2, SLM4 and MEH1. Interacts with GTR1; the interaction is direct.

Its subcellular location is the vacuole membrane. It catalyses the reaction GTP + H2O = GDP + phosphate + H(+). Functionally, GTPase involved in activation of the TORC1 signaling pathway, which promotes growth and represses autophagy in nutrient-rich conditions. Also required for TORC1 inactivation during nitrogen starvation. Required for intracellular sorting of GAP1 out of the endosome. Involved in the regulation of microautophagy. The chain is GTP-binding protein GTR2 from Saccharomyces cerevisiae (strain ATCC 204508 / S288c) (Baker's yeast).